The sequence spans 268 residues: Tryptophan synthase alpha chain (268 aa).

Catalysis depends on proton acceptor residues E49 and D60.

The protein belongs to the TrpA family. Tetramer of two alpha and two beta chains.

It catalyses the reaction (1S,2R)-1-C-(indol-3-yl)glycerol 3-phosphate + L-serine = D-glyceraldehyde 3-phosphate + L-tryptophan + H2O. The protein operates within amino-acid biosynthesis; L-tryptophan biosynthesis; L-tryptophan from chorismate: step 5/5. Functionally, the alpha subunit is responsible for the aldol cleavage of indoleglycerol phosphate to indole and glyceraldehyde 3-phosphate. The polypeptide is Tryptophan synthase alpha chain (Salmonella typhimurium (strain LT2 / SGSC1412 / ATCC 700720)).